The chain runs to 493 residues: MPVPPPPAPPPPPTFALANTEKPTLNKTEQAGRNALLSDISKGKKLKKTVTNDRSAPILDKPKGAGASAGGYGGGGGGGGGGGGGGGGSGGNFGGGGPPGLGGLFQAGMPKLRSTANRDNDSGGSRPPILPPGGRATSAKPFSPPSGPGRFPAPSPGHRSGPPEPPRNRMPPPRPDVGSKPDSLPPPVPNTPRPVPSSLHNRGSPAGLGAPRPPFPGNRGAAFGAGSARQNPSGSSSPFPRPPLPPTPSRALDDKPPPPPPPVGNRPSMHREAVPPPPSQTSKPPVPSTPRPGLGSQAPPPPPPPSRPGPPPLPPASNDEIPRLPQRNLSLTSSAPPLPSPGRSGPLPPPPSERPPPPVRDPPGRSGPLPPPPPINRNGSTARALPATPQLPSRSGMDSPRSGPRPPLPPDRPGAGAPPPPPPSTSVRNGFQDSSCEDEWESRFYFHPISDLPPPEPYVPTTKTYPSKLARNESRSGSNRRERGAPPLPPIPR.

The span at 1 to 14 (MPVPPPPAPPPPPT) shows a compositional bias: pro residues. The interval 1 to 493 (MPVPPPPAPP…GAPPLPPIPR (493 aa)) is disordered. A compositionally biased stretch (polar residues) spans 21–31 (EKPTLNKTEQA). The region spanning 32-49 (GRNALLSDISKGKKLKKT) is the WH2 domain. Arginine 33 is modified (asymmetric dimethylarginine). A binds actin region spans residues 45 to 48 (KLKK). A compositionally biased stretch (gly residues) spans 67-105 (ASAGGYGGGGGGGGGGGGGGGGSGGNFGGGGPPGLGGLF). Omega-N-methylarginine occurs at positions 126 and 135. 3 stretches are compositionally biased toward pro residues: residues 142–155 (FSPPSGPGRFPAPS), 162–175 (PPEPPRNRMPPPRP), and 183–195 (SLPPPVPNTPRPV). Phosphoserine is present on serine 143. Phosphoserine is present on serine 227. Pro residues-rich tracts occupy residues 239 to 248 (FPRPPLPPTP), 274 to 290 (VPPPPSQTSKPPVPSTP), and 298 to 315 (APPPPPPPSRPGPPPLPP). Serine 330 and serine 340 each carry phosphoserine. Pro residues predominate over residues 336–361 (PPLPSPGRSGPLPPPPSERPPPPVRD). 3 XRSGPXPPXP motif repeats span residues 342–351 (GRSGPLPPPP), 364–373 (GRSGPLPPPP), and 400–409 (PRSGPRPPLP). Pro residues predominate over residues 403–424 (GPRPPLPPDRPGAGAPPPPPPS). Over residues 425–434 (TSVRNGFQDS) the composition is skewed to polar residues. Positions 470 to 484 (ARNESRSGSNRRERG) are enriched in basic and acidic residues.

Belongs to the verprolin family. As to quaternary structure, binds to WAS within the N-terminal region, at a site distinct from the CDC42-binding site. Binds profilin and actin. Binds to WASL. Interacts with DBNL. Interacts with DBNL. Interacts with FNBP1L (via the SH3 domain).

It localises to the cytoplasmic vesicle. The protein localises to the cytoplasm. The protein resides in the cytoskeleton. Its subcellular location is the cell projection. It is found in the ruffle. Plays a role in the reorganization of the actin cytoskeleton. Contributes with NCK1 and GRB2 in the recruitment and activation of WASL. May participate in regulating the subcellular localization of WASL, resulting in the disassembly of stress fibers in favor of filopodia formation. Plays a role in the formation of cell ruffles. The chain is WAS/WASL-interacting protein family member 1 (Wipf1) from Mus musculus (Mouse).